The primary structure comprises 247 residues: Probable transcriptional regulatory protein lpp1249 (247 aa).

This sequence belongs to the TACO1 family.

Its subcellular location is the cytoplasm. The polypeptide is Probable transcriptional regulatory protein lpp1249 (Legionella pneumophila (strain Paris)).